The sequence spans 305 residues: Ribonuclease BN (305 aa).

The Zn(2+) site is built by H64, H66, D68, H69, H141, D212, and H270. D68 serves as the catalytic Proton acceptor.

Belongs to the RNase Z family. RNase BN subfamily. Homodimer. Zn(2+) serves as cofactor.

Zinc phosphodiesterase, which has both exoribonuclease and endoribonuclease activities. This chain is Ribonuclease BN, found in Escherichia coli O7:K1 (strain IAI39 / ExPEC).